We begin with the raw amino-acid sequence, 361 residues long: tRNA-specific 2-thiouridylase MnmA (361 aa).

ATP-binding positions include 8 to 15 (GMSGGVDS) and Met34. The tract at residues 94 to 96 (NPD) is interaction with target base in tRNA. Cys99 functions as the Nucleophile in the catalytic mechanism. Cys99 and Cys195 are joined by a disulfide. Residue Gly123 participates in ATP binding. Residues 145–147 (KDQ) are interaction with tRNA. Catalysis depends on Cys195, which acts as the Cysteine persulfide intermediate. Residues 307 to 308 (RY) are interaction with tRNA.

This sequence belongs to the MnmA/TRMU family.

Its subcellular location is the cytoplasm. It catalyses the reaction S-sulfanyl-L-cysteinyl-[protein] + uridine(34) in tRNA + AH2 + ATP = 2-thiouridine(34) in tRNA + L-cysteinyl-[protein] + A + AMP + diphosphate + H(+). Functionally, catalyzes the 2-thiolation of uridine at the wobble position (U34) of tRNA, leading to the formation of s(2)U34. The protein is tRNA-specific 2-thiouridylase MnmA of Legionella pneumophila (strain Paris).